The sequence spans 163 residues: Putative pre-16S rRNA nuclease (163 aa).

It belongs to the YqgF nuclease family.

Its subcellular location is the cytoplasm. In terms of biological role, could be a nuclease involved in processing of the 5'-end of pre-16S rRNA. This is Putative pre-16S rRNA nuclease from Rhodopseudomonas palustris (strain BisA53).